The sequence spans 629 residues: tRNA uridine 5-carboxymethylaminomethyl modification enzyme MnmG (629 aa).

Residues 13–18, Val-125, and Ser-180 each bind FAD; that span reads GGGHAG. 273 to 287 contributes to the NAD(+) binding site; the sequence is GPRYCPSIEDKVMRF. Gln-370 is an FAD binding site.

Belongs to the MnmG family. In terms of assembly, homodimer. Heterotetramer of two MnmE and two MnmG subunits. FAD is required as a cofactor.

The protein localises to the cytoplasm. NAD-binding protein involved in the addition of a carboxymethylaminomethyl (cmnm) group at the wobble position (U34) of certain tRNAs, forming tRNA-cmnm(5)s(2)U34. The sequence is that of tRNA uridine 5-carboxymethylaminomethyl modification enzyme MnmG from Salmonella agona (strain SL483).